The chain runs to 110 residues: Nucleoid-associated protein RALTA_A1934 (110 aa).

Residues 88–98 (TTQEKMGSMTS) show a composition bias toward polar residues. The disordered stretch occupies residues 88–110 (TTQEKMGSMTSGLPLPPGFKLPF). A compositionally biased stretch (pro residues) spans 101 to 110 (PLPPGFKLPF).

It belongs to the YbaB/EbfC family. Homodimer.

The protein resides in the cytoplasm. It is found in the nucleoid. Functionally, binds to DNA and alters its conformation. May be involved in regulation of gene expression, nucleoid organization and DNA protection. This Cupriavidus taiwanensis (strain DSM 17343 / BCRC 17206 / CCUG 44338 / CIP 107171 / LMG 19424 / R1) (Ralstonia taiwanensis (strain LMG 19424)) protein is Nucleoid-associated protein RALTA_A1934.